Consider the following 300-residue polypeptide: MNTNVTIAGVTFKNPVTTASGTFGSGMEYSEFVDLNRLGAITTKGVSSVPWPGNPVPRIAETYGGMLNAIGLQNPGVDMFVERDLAFLKQFDTKVIVNVCGKSVKEYVEVVERLSEEAVDLLELNISCPNVKEGCIAFGQDPKMIAMIMDEIKRHAKQPVIVKLSPNVTDITEMAKAAEAGGADALSLINTLTGMKIDINHRAFAIANKTGGMSGPAVKPIAVRMVYQVANAVKLPIIGMGGIQNAEDALEFIMAGATVVAVGTANFINPYATVEVIEGIEEFMRKNQISDINDLIGCVK.

Residues Ser-20 and 44–45 (KG) contribute to the FMN site. Substrate is bound by residues Lys-44 and 68 to 72 (NAIGL). FMN contacts are provided by Asn-98 and Asn-125. Asn-125 lines the substrate pocket. Catalysis depends on Cys-128, which acts as the Nucleophile. The FMN site is built by Lys-163 and Ile-189. Residue 190–191 (NT) coordinates substrate. FMN contacts are provided by residues Gly-215, 241-242 (GG), and 263-264 (GT).

This sequence belongs to the dihydroorotate dehydrogenase family. Type 1 subfamily. Heterotetramer of 2 PyrK and 2 PyrD type B subunits. It depends on FMN as a cofactor.

It is found in the cytoplasm. It carries out the reaction (S)-dihydroorotate + NAD(+) = orotate + NADH + H(+). The protein operates within pyrimidine metabolism; UMP biosynthesis via de novo pathway; orotate from (S)-dihydroorotate (NAD(+) route): step 1/1. Functionally, catalyzes the conversion of dihydroorotate to orotate with NAD(+) as electron acceptor. The protein is Dihydroorotate dehydrogenase B (NAD(+)), catalytic subunit (pyrD) of Lachnoclostridium phytofermentans (strain ATCC 700394 / DSM 18823 / ISDg) (Clostridium phytofermentans).